The following is a 319-amino-acid chain: Acetyl-coenzyme A carboxylase carboxyl transferase subunit alpha (319 aa).

Positions asparagine 32–alanine 293 constitute a CoA carboxyltransferase C-terminal domain.

This sequence belongs to the AccA family. In terms of assembly, acetyl-CoA carboxylase is a heterohexamer composed of biotin carboxyl carrier protein (AccB), biotin carboxylase (AccC) and two subunits each of ACCase subunit alpha (AccA) and ACCase subunit beta (AccD).

Its subcellular location is the cytoplasm. It carries out the reaction N(6)-carboxybiotinyl-L-lysyl-[protein] + acetyl-CoA = N(6)-biotinyl-L-lysyl-[protein] + malonyl-CoA. Its pathway is lipid metabolism; malonyl-CoA biosynthesis; malonyl-CoA from acetyl-CoA: step 1/1. Its function is as follows. Component of the acetyl coenzyme A carboxylase (ACC) complex. First, biotin carboxylase catalyzes the carboxylation of biotin on its carrier protein (BCCP) and then the CO(2) group is transferred by the carboxyltransferase to acetyl-CoA to form malonyl-CoA. The protein is Acetyl-coenzyme A carboxylase carboxyl transferase subunit alpha of Xylella fastidiosa (strain Temecula1 / ATCC 700964).